The chain runs to 635 residues: Endo-1,4-beta-xylanase B (635 aa).

The 337-residue stretch at 1 to 337 (MNLKTAYEPY…KEAYYAVLKA (337 aa)) folds into the GH10 domain. Glutamate 150 serves as the catalytic Proton donor. Residue glutamate 255 is the Nucleophile of the active site.

Belongs to the glycosyl hydrolase 10 (cellulase F) family.

It carries out the reaction Endohydrolysis of (1-&gt;4)-beta-D-xylosidic linkages in xylans.. The protein operates within glycan degradation; xylan degradation. Its function is as follows. B.fibrisolvens is located in the rumen of ruminant animals, where it contributes to the animal's digestion of plant material by hydrolyzing hemicellulose with its xylanases. The sequence is that of Endo-1,4-beta-xylanase B (xynB) from Butyrivibrio fibrisolvens.